The chain runs to 407 residues: Cysteine desulfurase (407 aa).

K226 carries the post-translational modification N6-(pyridoxal phosphate)lysine. The Cysteine persulfide intermediate role is filled by C364.

The protein belongs to the class-V pyridoxal-phosphate-dependent aminotransferase family. Csd subfamily. In terms of assembly, homodimer. Interacts with SufE and the SufBCD complex composed of SufB, SufC and SufD. The interaction with SufE is required to mediate the direct transfer of the sulfur atom from the S-sulfanylcysteine. The cofactor is pyridoxal 5'-phosphate.

It is found in the cytoplasm. It carries out the reaction (sulfur carrier)-H + L-cysteine = (sulfur carrier)-SH + L-alanine. It catalyses the reaction L-selenocysteine + AH2 = hydrogenselenide + L-alanine + A + H(+). It participates in cofactor biosynthesis; iron-sulfur cluster biosynthesis. Functionally, cysteine desulfurases mobilize the sulfur from L-cysteine to yield L-alanine, an essential step in sulfur metabolism for biosynthesis of a variety of sulfur-containing biomolecules. Component of the suf operon, which is activated and required under specific conditions such as oxidative stress and iron limitation. Acts as a potent selenocysteine lyase in vitro, that mobilizes selenium from L-selenocysteine. Selenocysteine lyase activity is however unsure in vivo. This Pectobacterium carotovorum subsp. carotovorum (strain PC1) protein is Cysteine desulfurase.